The primary structure comprises 145 residues: Holo-[acyl-carrier-protein] synthase (145 aa).

Mg(2+) contacts are provided by D8 and E59.

It belongs to the P-Pant transferase superfamily. AcpS family. Mg(2+) is required as a cofactor.

The protein localises to the cytoplasm. It catalyses the reaction apo-[ACP] + CoA = holo-[ACP] + adenosine 3',5'-bisphosphate + H(+). Functionally, transfers the 4'-phosphopantetheine moiety from coenzyme A to a Ser of acyl-carrier-protein. The polypeptide is Holo-[acyl-carrier-protein] synthase (Granulibacter bethesdensis (strain ATCC BAA-1260 / CGDNIH1)).